The sequence spans 1367 residues: Probable serine/threonine-protein kinase pkgA (1367 aa).

Disordered stretches follow at residues 140–164 (IDEN…NKTI), 264–429 (KNGK…LLSR), 456–556 (PTPL…SRKP), and 771–792 (PREE…SDPV). Over residues 143–162 (NNNNNNNNNNNNNNNNNKNK) the composition is skewed to low complexity. A compositionally biased stretch (pro residues) spans 271–282 (IKRPSPPLPPPQ). Basic and acidic residues predominate over residues 287 to 326 (EQQKEQKEQQKEQQKEQQKEQQKEQEQKQQEPQKYVKFEI). Residues 340 to 381 (ISSSNISNEISKQQQQQQQQQQQQQQQQQQQQQQQQQQQQQQ) show a composition bias toward low complexity. Residues 399-421 (ANNNILTTPLSSQPTQSLETPST) are compositionally biased toward polar residues. Residues 506 to 517 (GEDEEEDEDDDN) are compositionally biased toward acidic residues. The span at 531 to 544 (LKNKRPFKKTHVHH) shows a compositional bias: basic residues. In terms of domain architecture, Protein kinase spans 810 to 1236 (FEFIKPITKG…AEEIKSHPFF (427 aa)). ATP is bound by residues 816 to 824 (ITKGGYGKV) and lysine 839. Aspartate 933 acts as the Proton acceptor in catalysis. Disordered stretches follow at residues 971–1034 (FSPT…PSNT), 1084–1134 (FIPP…HNIH), and 1288–1312 (QNQN…TATA). Low complexity predominate over residues 979–1015 (NNQSSSSSSVSNIGGSNTIGSNISSTNNNNNNNNTTG). The segment covering 1025–1034 (NTETPIPSNT) has biased composition (polar residues). Composition is skewed to low complexity over residues 1092 to 1125 (QQPI…QQTT) and 1294 to 1312 (SSTI…TATA). Positions 1237–1347 (KSINWKTILT…VNFQSLLELN (111 aa)) constitute an AGC-kinase C-terminal domain.

It belongs to the protein kinase superfamily. AGC Ser/Thr protein kinase family.

The enzyme catalyses L-seryl-[protein] + ATP = O-phospho-L-seryl-[protein] + ADP + H(+). The catalysed reaction is L-threonyl-[protein] + ATP = O-phospho-L-threonyl-[protein] + ADP + H(+). This is Probable serine/threonine-protein kinase pkgA (pkgA) from Dictyostelium discoideum (Social amoeba).